The chain runs to 76 residues: Omega-conotoxin-like TxO2 (76 aa).

An N-terminal signal peptide occupies residues 1-22 (MKLTCVVIVAVLFLTAWTFVTA). The propeptide occupies 23–52 (APHSSNALENLYLKAHHEMNNPEDSELNKR). Cystine bridges form between cysteine 53-cysteine 67, cysteine 60-cysteine 71, and cysteine 66-cysteine 75.

It belongs to the conotoxin O1 superfamily. In terms of tissue distribution, expressed by the venom duct.

It is found in the secreted. Its function is as follows. Omega-conotoxins act at presynaptic membranes, they bind and block voltage-gated calcium channels (Cav). This is Omega-conotoxin-like TxO2 from Conus textile (Cloth-of-gold cone).